The primary structure comprises 227 residues: Ribose-5-phosphate isomerase A (227 aa).

Residues 30-33 (TGST), 86-89 (DGAD), and 99-102 (KGMG) contribute to the substrate site. Residue Glu-108 is the Proton acceptor of the active site. Residue Lys-126 coordinates substrate.

The protein belongs to the ribose 5-phosphate isomerase family. In terms of assembly, homodimer.

The catalysed reaction is aldehydo-D-ribose 5-phosphate = D-ribulose 5-phosphate. It functions in the pathway carbohydrate degradation; pentose phosphate pathway; D-ribose 5-phosphate from D-ribulose 5-phosphate (non-oxidative stage): step 1/1. Functionally, catalyzes the reversible conversion of ribose-5-phosphate to ribulose 5-phosphate. This Thermus thermophilus (strain ATCC 27634 / DSM 579 / HB8) protein is Ribose-5-phosphate isomerase A.